The chain runs to 494 residues: MADLANEEKPAIAPPVFVFQKDKGQKRSAGSSSPEGGEDSDREDGNYRPPVKRERTSSLTQFPPSQSEERSSGFRLKPPTLIRGQAPSAGLPSQKPKEQQRSVLRPAVLQAPQPKALSQTVPSSGTNGVSLPADCTGAVPAASPDTAARRSPAEAADEEKEPQKNESSNASGEEACEKKDPATQQAFVFGQNLRDRVKLINESMDEADMENAGHPSADTPTATNYFLQYISSSLENSTNSADASSNKFVFGQNMSERVLSPPKLNEVSSDANRENAAAESGSESSSQEATPEKESLAESAAAYTKATARKCLLEKVEVITGEEAESNVLQMQCKLFVFDKTSQSWVERGRGLLRLNDMASTDDGTLQSRLVMRTQGSLRLILNTKLWAQMQIDKASEKSIRITAMDTEDQVVKVFLISASSKDTGQLYAALHHRILALRSRVEQEQEAKMPAPEPGAAPSNEEDDSDDDDVLAPSGATAAGAGDEGDGQTTGST.

Over residues 1-10 the composition is skewed to basic and acidic residues; the sequence is MADLANEEKP. 3 disordered regions span residues 1 to 192, 259 to 300, and 442 to 494; these read MADL…FGQN, LSPP…AESA, and VEQE…TGST. Ala2 carries the post-translational modification N-acetylalanine. An N6-acetyllysine mark is found at Lys9 and Lys21. Ser32, Ser33, and Ser40 each carry phosphoserine. Residues 43 to 56 are compositionally biased toward basic and acidic residues; that stretch reads EDGNYRPPVKRERT. The Nuclear localization signal motif lies at 49-57; the sequence is PPVKRERTS. Thr56 carries the post-translational modification Phosphothreonine. Composition is skewed to polar residues over residues 57 to 66 and 116 to 129; these read SSLTQFPPSQ and ALSQ…TNGV. At Ser58 the chain carries Phosphoserine. Phosphoserine occurs at positions 151, 260, 280, 282, and 299. Positions 274–289 are enriched in low complexity; the sequence is ENAAAESGSESSSQEA. The region spanning 305-445 is the RanBD1 domain; sequence KATARKCLLE…LALRSRVEQE (141 aa). Residues 461 to 471 are compositionally biased toward acidic residues; sequence NEEDDSDDDDV. At Ser466 the chain carries Phosphoserine. Positions 476 to 494 are enriched in low complexity; sequence GATAAGAGDEGDGQTTGST.

As to quaternary structure, interacts with CHC1 in a Ran-stimulated manner. Interacts with XPO1. Interacts (via its C-terminal R domain) with SMAD2 (dephosphorylated form via its MH1 and MH2 domains); the interaction results in the nuclear export of SMAD2 and termination of the TGF-beta signaling. Interacts (via its C-terminal R domain) with SMAD3 (dephosphorylated form via its MH1 domain); the interaction results in the nuclear export of SMAD3 and termination of the TGF-beta signaling. Post-translationally, phosphorylation at Ser-58 promotes its import into the nucleus.

It localises to the cytoplasm. Its subcellular location is the nucleus. Its function is as follows. Acts as a cofactor for XPO1/CRM1-mediated nuclear export, perhaps as export complex scaffolding protein. Bound to XPO1/CRM1, stabilizes the XPO1/CRM1-cargo interaction. In the absence of Ran-bound GTP prevents binding of XPO1/CRM1 to the nuclear pore complex. Binds to CHC1/RCC1 and increases the guanine nucleotide exchange activity of CHC1/RCC1. Recruits XPO1/CRM1 to CHC1/RCC1 in a Ran-dependent manner. Negative regulator of TGF-beta signaling through interaction with the R-SMAD proteins, SMAD2 and SMAD3, and mediating their nuclear export. This chain is Ran-binding protein 3 (RANBP3), found in Pongo abelii (Sumatran orangutan).